Here is a 316-residue protein sequence, read N- to C-terminus: 4-diphosphocytidyl-2-C-methyl-D-erythritol kinase (316 aa).

Lys23 is a catalytic residue. 108 to 118 (PVAGGMAGGSA) contributes to the ATP binding site. The active site involves Asp150.

Belongs to the GHMP kinase family. IspE subfamily.

The catalysed reaction is 4-CDP-2-C-methyl-D-erythritol + ATP = 4-CDP-2-C-methyl-D-erythritol 2-phosphate + ADP + H(+). It participates in isoprenoid biosynthesis; isopentenyl diphosphate biosynthesis via DXP pathway; isopentenyl diphosphate from 1-deoxy-D-xylulose 5-phosphate: step 3/6. Functionally, catalyzes the phosphorylation of the position 2 hydroxy group of 4-diphosphocytidyl-2C-methyl-D-erythritol. In Mycolicibacterium paratuberculosis (strain ATCC BAA-968 / K-10) (Mycobacterium paratuberculosis), this protein is 4-diphosphocytidyl-2-C-methyl-D-erythritol kinase.